The following is a 311-amino-acid chain: Lipoyl synthase (311 aa).

7 residues coordinate [4Fe-4S] cluster: C47, C52, C58, C73, C77, C80, and S286. Residues 59–276 form the Radical SAM core domain; sequence WSRHTATYLA…RSVGESLGLF (218 aa).

Belongs to the radical SAM superfamily. Lipoyl synthase family. It depends on [4Fe-4S] cluster as a cofactor.

Its subcellular location is the cytoplasm. The catalysed reaction is [[Fe-S] cluster scaffold protein carrying a second [4Fe-4S](2+) cluster] + N(6)-octanoyl-L-lysyl-[protein] + 2 oxidized [2Fe-2S]-[ferredoxin] + 2 S-adenosyl-L-methionine + 4 H(+) = [[Fe-S] cluster scaffold protein] + N(6)-[(R)-dihydrolipoyl]-L-lysyl-[protein] + 4 Fe(3+) + 2 hydrogen sulfide + 2 5'-deoxyadenosine + 2 L-methionine + 2 reduced [2Fe-2S]-[ferredoxin]. Its pathway is protein modification; protein lipoylation via endogenous pathway; protein N(6)-(lipoyl)lysine from octanoyl-[acyl-carrier-protein]: step 2/2. Its function is as follows. Catalyzes the radical-mediated insertion of two sulfur atoms into the C-6 and C-8 positions of the octanoyl moiety bound to the lipoyl domains of lipoate-dependent enzymes, thereby converting the octanoylated domains into lipoylated derivatives. This chain is Lipoyl synthase, found in Chlamydia trachomatis serovar A (strain ATCC VR-571B / DSM 19440 / HAR-13).